Here is an 800-residue protein sequence, read N- to C-terminus: U4/U6.U5 tri-snRNP-associated protein 1 (800 aa).

Residues methionine 1–isoleucine 120 are disordered. Over residues histidine 32–serine 42 the composition is skewed to basic residues. Over residues glutamate 58–glycine 101 the composition is skewed to basic and acidic residues. A compositionally biased stretch (low complexity) spans alanine 104–serine 119. Glycyl lysine isopeptide (Lys-Gly) (interchain with G-Cter in SUMO2) cross-links involve residues lysine 125 and lysine 133. Lysine 141 is covalently cross-linked (Glycyl lysine isopeptide (Lys-Gly) (interchain with G-Cter in SUMO1); alternate). Lysine 141 is covalently cross-linked (Glycyl lysine isopeptide (Lys-Gly) (interchain with G-Cter in SUMO2); alternate). Glycyl lysine isopeptide (Lys-Gly) (interchain with G-Cter in SUMO2) cross-links involve residues lysine 147 and lysine 188. The stretch at asparagine 157–phenylalanine 231 forms a coiled coil. Residue threonine 189 is modified to Phosphothreonine. Residue lysine 277 forms a Glycyl lysine isopeptide (Lys-Gly) (interchain with G-Cter in SUMO2) linkage. The segment at proline 311 to proline 330 is disordered. Serine 321 bears the Phosphoserine mark. Glycyl lysine isopeptide (Lys-Gly) (interchain with G-Cter in SUMO2) cross-links involve residues lysine 329 and lysine 336. Serine 348 is subject to Phosphoserine. Phosphothreonine is present on threonine 392. Glycyl lysine isopeptide (Lys-Gly) (interchain with G-Cter in SUMO2) cross-links involve residues lysine 400 and lysine 414. The interval arginine 419–leucine 497 is disordered. Phosphothreonine is present on threonine 430. Residues serine 448, serine 474, serine 486, and serine 521 each carry the phosphoserine modification. Residues leucine 490 to glutamate 533 adopt a coiled-coil conformation. Lysine 548 participates in a covalent cross-link: Glycyl lysine isopeptide (Lys-Gly) (interchain with G-Cter in SUMO2). A disordered region spans residues leucine 571 to isoleucine 604. Serine 591, serine 596, serine 598, and serine 621 each carry phosphoserine. Glycyl lysine isopeptide (Lys-Gly) (interchain with G-Cter in SUMO2) cross-links involve residues lysine 648, lysine 657, and lysine 684. Position 695 is a phosphothreonine (threonine 695). Glycyl lysine isopeptide (Lys-Gly) (interchain with G-Cter in SUMO2) cross-links involve residues lysine 699, lysine 709, lysine 723, lysine 749, and lysine 758. The residue at position 761 (serine 761) is a Phosphoserine. Threonine 764 is modified (phosphothreonine). Residues lysine 775 and lysine 780 each participate in a glycyl lysine isopeptide (Lys-Gly) (interchain with G-Cter in SUMO2) cross-link. A Phosphoserine modification is found at serine 789. Residue lysine 791 forms a Glycyl lysine isopeptide (Lys-Gly) (interchain with G-Cter in SUMO2) linkage.

The protein belongs to the SNU66/SART1 family. In terms of assembly, identified in the spliceosome C complex. Component of the U4/U6-U5 tri-snRNP complex composed of the U4, U6 and U5 snRNAs and at least PRPF3, PRPF4, PRPF6, PRPF8, PRPF31, SNRNP200, TXNL4A, SNRNP40, DDX23, CD2BP2, PPIH, SNU13, EFTUD2, SART1 and USP39. Interacts with UBL5. Interacts with IVNS1ABP (via Kelch repeats). Sumoylated with SUMO2. Ubiquitously expressed.

Its subcellular location is the nucleus. In terms of biological role, plays a role in mRNA splicing as a component of the U4/U6-U5 tri-snRNP, one of the building blocks of the spliceosome. May also bind to DNA. The protein is U4/U6.U5 tri-snRNP-associated protein 1 (SART1) of Homo sapiens (Human).